The sequence spans 155 residues: DNA polymerase epsilon subunit 4 (155 aa).

Acidic residues-rich tracts occupy residues Met-1 to Asp-16 and Glu-24 to Glu-48. A disordered region spans residues Met-1–Thr-76. The span at Ala-49 to Asn-65 shows a compositional bias: polar residues.

As to quaternary structure, component of the DNA polymerase epsilon complex consisting of four subunits: the catalytic subunit PolE1/DNApol-epsilon255 and the accessory subunits PolE2/DNApol-epsilon58, Chrac-14/DNApolE3 and PolE4/Mes4.

It is found in the nucleus. Its function is as follows. Accessory component of the DNA polymerase epsilon complex. Participates in DNA repair and in chromosomal DNA replication. Has a role in cell cycle progression. Required for wing morphogenesis. This Drosophila melanogaster (Fruit fly) protein is DNA polymerase epsilon subunit 4.